A 122-amino-acid chain; its full sequence is Large ribosomal subunit protein uL14 (122 aa).

Belongs to the universal ribosomal protein uL14 family. Part of the 50S ribosomal subunit. Forms a cluster with proteins L3 and L19. In the 70S ribosome, L14 and L19 interact and together make contacts with the 16S rRNA in bridges B5 and B8.

Functionally, binds to 23S rRNA. Forms part of two intersubunit bridges in the 70S ribosome. The polypeptide is Large ribosomal subunit protein uL14 (Lactobacillus gasseri (strain ATCC 33323 / DSM 20243 / BCRC 14619 / CIP 102991 / JCM 1131 / KCTC 3163 / NCIMB 11718 / NCTC 13722 / AM63)).